A 369-amino-acid polypeptide reads, in one-letter code: Anthranilate phosphoribosyltransferase (369 aa).

5-phospho-alpha-D-ribose 1-diphosphate contacts are provided by residues G111, 114-115, T119, 121-124, 139-147, and S151; these read GD, NIST, and KHGNRGVSS. Anthranilate is bound at residue G111. A Mg(2+)-binding site is contributed by S123. N142 contacts anthranilate. R197 contributes to the anthranilate binding site. Positions 256 and 257 each coordinate Mg(2+).

The protein belongs to the anthranilate phosphoribosyltransferase family. Homodimer. The cofactor is Mg(2+).

The enzyme catalyses N-(5-phospho-beta-D-ribosyl)anthranilate + diphosphate = 5-phospho-alpha-D-ribose 1-diphosphate + anthranilate. Its pathway is amino-acid biosynthesis; L-tryptophan biosynthesis; L-tryptophan from chorismate: step 2/5. Its function is as follows. Catalyzes the transfer of the phosphoribosyl group of 5-phosphorylribose-1-pyrophosphate (PRPP) to anthranilate to yield N-(5'-phosphoribosyl)-anthranilate (PRA). This chain is Anthranilate phosphoribosyltransferase, found in Cupriavidus pinatubonensis (strain JMP 134 / LMG 1197) (Cupriavidus necator (strain JMP 134)).